The primary structure comprises 363 residues: Proline/serine-rich coiled-coil protein 1 (363 aa).

S22 carries the post-translational modification Phosphoserine. The stretch at P38–P41 is repeat 1. A disordered region spans residues E39–G67. L42 carries the phosphoserine modification. Residue G45 is modified to Phosphothreonine. Phosphoserine occurs at positions 47, 65, 70, 98, 122, and 140. The stretch at P68 to P71 is repeat 2. Residues S70–Q94 adopt a coiled-coil conformation. The interval D95–R363 is disordered. The segment at L103–P246 is 4 X 4 AA repeats of P-X-X-P. Over residues P112 to V124 the composition is skewed to basic and acidic residues. A compositionally biased stretch (low complexity) spans S133–L148. Residue T145 is modified to Phosphothreonine. A phosphoserine mark is found at S186 and S190. Residues S186–T196 show a composition bias toward polar residues. The segment covering P197–A210 has biased composition (low complexity). At S212 the chain carries Phosphoserine. Residue T215 is modified to Phosphothreonine. 2 consecutive repeat copies span residues P238–P241 and P243–P246.

It belongs to the PSRC1 family. In terms of assembly, interacts with APC2. Interacts with KIF2A. Interacts with ANKRD53; recruits ANKRD53 to the spindle during mitosis. Phosphorylated during mitosis. Widely expressed in adult and fetal tissues, with highest expression in the adult brain and fetal thymus. Not detected in adult skeletal muscle.

Its subcellular location is the cytoplasm. It is found in the cytoskeleton. The protein localises to the spindle. The protein resides in the spindle pole. Required for normal progression through mitosis. Required for normal congress of chromosomes at the metaphase plate, and for normal rate of chromosomal segregation during anaphase. Plays a role in the regulation of mitotic spindle dynamics. Increases the rate of turnover of microtubules on metaphase spindles, and contributes to the generation of normal tension across sister kinetochores. Recruits KIF2A and ANKRD53 to the mitotic spindle and spindle poles. May participate in p53/TP53-regulated growth suppression. This is Proline/serine-rich coiled-coil protein 1 (PSRC1) from Homo sapiens (Human).